A 270-amino-acid polypeptide reads, in one-letter code: Malonyl-[acyl-carrier protein] O-methyltransferase (270 aa).

The protein belongs to the methyltransferase superfamily.

The catalysed reaction is malonyl-[ACP] + S-adenosyl-L-methionine = malonyl-[ACP] methyl ester + S-adenosyl-L-homocysteine. It functions in the pathway cofactor biosynthesis; biotin biosynthesis. In terms of biological role, converts the free carboxyl group of a malonyl-thioester to its methyl ester by transfer of a methyl group from S-adenosyl-L-methionine (SAM). It allows to synthesize pimeloyl-ACP via the fatty acid synthetic pathway. This is Malonyl-[acyl-carrier protein] O-methyltransferase from Magnetococcus marinus (strain ATCC BAA-1437 / JCM 17883 / MC-1).